A 222-amino-acid chain; its full sequence is MEASRVKPGFNGVGMAAGSVNGSSRRPGPGLGYGYGYYMGSGAAAGGSGRAAQAPVDGCSVALRVFVVASTLVSAVVMGVDRQTRTIQITITDALPPLEVPLTANWSYSSAFVYFVVANAMVCLFSAAALAACRSRAAMVPVMVGDLLALALLYSAVGAAAEFGILGERGNSHVRWAKVCNVYGRFCDRAMAAVIVSLIGAFANLVLLMLNILTIHKSSSYY.

Over 1-59 (MEASRVKPGFNGVGMAAGSVNGSSRRPGPGLGYGYGYYMGSGAAAGGSGRAAQAPVDGC) the chain is Cytoplasmic. A helical membrane pass occupies residues 60–80 (SVALRVFVVASTLVSAVVMGV). Residues 81-110 (DRQTRTIQITITDALPPLEVPLTANWSYSS) are Extracellular-facing. N105 carries N-linked (GlcNAc...) asparagine glycosylation. Residues 111–131 (AFVYFVVANAMVCLFSAAALA) traverse the membrane as a helical segment. The Cytoplasmic portion of the chain corresponds to 132–146 (ACRSRAAMVPVMVGD). Residues 147–167 (LLALALLYSAVGAAAEFGILG) form a helical membrane-spanning segment. The Extracellular segment spans residues 168 to 189 (ERGNSHVRWAKVCNVYGRFCDR). Residues 190-210 (AMAAVIVSLIGAFANLVLLML) traverse the membrane as a helical segment. The Cytoplasmic segment spans residues 211–222 (NILTIHKSSSYY).

The protein belongs to the Casparian strip membrane proteins (CASP) family. As to quaternary structure, homodimer and heterodimers.

It localises to the cell membrane. The chain is CASP-like protein 1E1 from Sorghum bicolor (Sorghum).